We begin with the raw amino-acid sequence, 142 residues long: Large ribosomal subunit protein uL11 (142 aa).

This sequence belongs to the universal ribosomal protein uL11 family. In terms of assembly, part of the ribosomal stalk of the 50S ribosomal subunit. Interacts with L10 and the large rRNA to form the base of the stalk. L10 forms an elongated spine to which L12 dimers bind in a sequential fashion forming a multimeric L10(L12)X complex. In terms of processing, one or more lysine residues are methylated.

Its function is as follows. Forms part of the ribosomal stalk which helps the ribosome interact with GTP-bound translation factors. This Rhodopseudomonas palustris (strain BisB5) protein is Large ribosomal subunit protein uL11.